Reading from the N-terminus, the 434-residue chain is Glutamate-1-semialdehyde 2,1-aminomutase 1 (434 aa).

Residue Lys270 is modified to N6-(pyridoxal phosphate)lysine.

The protein belongs to the class-III pyridoxal-phosphate-dependent aminotransferase family. HemL subfamily. In terms of assembly, homodimer. The cofactor is pyridoxal 5'-phosphate.

Its subcellular location is the cytoplasm. It catalyses the reaction (S)-4-amino-5-oxopentanoate = 5-aminolevulinate. It functions in the pathway porphyrin-containing compound metabolism; protoporphyrin-IX biosynthesis; 5-aminolevulinate from L-glutamyl-tRNA(Glu): step 2/2. The chain is Glutamate-1-semialdehyde 2,1-aminomutase 1 from Bacillus cereus (strain ATCC 10987 / NRS 248).